The primary structure comprises 494 residues: Trigger factor (494 aa).

Residues 169-254 (GDRITMDYVG…VKDVAAPGAV (86 aa)) form the PPIase FKBP-type domain. The segment at 440-494 (LLAEDEGEAKAETKKAAPKKKAAAKSEAAEAGEGEEAAPKKKAAPKKKASEDSAE) is disordered.

The protein belongs to the FKBP-type PPIase family. Tig subfamily.

It localises to the cytoplasm. The enzyme catalyses [protein]-peptidylproline (omega=180) = [protein]-peptidylproline (omega=0). Its function is as follows. Involved in protein export. Acts as a chaperone by maintaining the newly synthesized protein in an open conformation. Functions as a peptidyl-prolyl cis-trans isomerase. This Rhizobium etli (strain ATCC 51251 / DSM 11541 / JCM 21823 / NBRC 15573 / CFN 42) protein is Trigger factor.